A 489-amino-acid polypeptide reads, in one-letter code: F-box/LRR-repeat protein 7 (489 aa).

Residues 1-31 (MGANNGKQSGSEGKGSSSISSDLSSSTDQTS) show a composition bias toward low complexity. The tract at residues 1–76 (MGANNGKQSG…AVLNGSSTSS (76 aa)) is disordered. The span at 32-55 (TKAPKNAATSEDSDLSMRTVSTPS) shows a compositional bias: polar residues. Positions 64 to 76 (SSSAVLNGSSTSS) are enriched in low complexity. Positions 109-155 (GAPVDILPDHAFLQIFTHLPTNQLCRCARVCRRWYNLAWDPRLWRTI) constitute an F-box domain. 11 LRR repeats span residues 168 to 193 (LRVL…MVSG), 194 to 219 (CRRL…EVAG), 220 to 245 (CYNV…DVSG), 251 to 279 (CISL…DMTD), 280 to 305 (CFAL…YLRR), 306 to 331 (CVRL…SVSD), 332 to 357 (CRFI…SIAH), 358 to 383 (CSRI…NARG), 384 to 409 (CEGL…DIGK), 410 to 435 (CPLV…SLKS), and 436 to 461 (CESI…NVQD).

It belongs to the FBXL7 family. Part of the SCF (SKP1-CUL1-F-box) E3 ubiquitin-protein ligase complex SCF(FBXL7).

It is found in the cytoplasm. Its subcellular location is the cytoskeleton. The protein localises to the microtubule organizing center. The protein resides in the centrosome. It participates in protein modification; protein ubiquitination. Its function is as follows. Substrate recognition component of a SCF (SKP1-CUL1-F-box protein) E3 ubiquitin-protein ligase complex which mediates the ubiquitination and subsequent proteasomal degradation of target proteins. The chain is F-box/LRR-repeat protein 7 (fbxl7) from Danio rerio (Zebrafish).